The chain runs to 941 residues: Probable lipoxygenase 8, chloroplastic (941 aa).

2 disordered regions span residues 1-22 (MLRP…SSSS) and 45-68 (LIAG…VVRC). A chloroplast-targeting transit peptide spans 1-67 (MLRPQLNPSS…QQGRQRVVVR (67 aa)). One can recognise a PLAT domain in the interval 100–236 (AVATIKVTVE…SIDEGTPGKR (137 aa)). The Lipoxygenase domain occupies 242 to 941 (AYLPGQTPAG…GMGIPNSTSI (700 aa)). Disordered regions lie at residues 255–274 (YREE…READ) and 288–331 (NPDS…RKGN). Residues 319-331 (SKKDPKSETRKGN) are compositionally biased toward basic and acidic residues. Histidine 598, histidine 603, histidine 790, asparagine 794, and isoleucine 941 together coordinate Fe cation.

It belongs to the lipoxygenase family. Requires Fe cation as cofactor.

It localises to the plastid. The protein resides in the chloroplast. The catalysed reaction is (9Z,12Z)-octadecadienoate + O2 = (13S)-hydroperoxy-(9Z,11E)-octadecadienoate. It catalyses the reaction (9Z,12Z,15Z)-octadecatrienoate + O2 = (13S)-hydroperoxy-(9Z,11E,15Z)-octadecatrienoate. The protein operates within lipid metabolism; oxylipin biosynthesis. In terms of biological role, plant lipoxygenase may be involved in a number of diverse aspects of plant physiology including growth and development, pest resistance, and senescence or responses to wounding. It catalyzes the hydroperoxidation of lipids containing a cis,cis-1,4-pentadiene structure. This chain is Probable lipoxygenase 8, chloroplastic (CM-LOX2), found in Oryza sativa subsp. japonica (Rice).